A 249-amino-acid chain; its full sequence is 5'-nucleotidase SurE (249 aa).

Residues Asp8, Asp9, Ser39, and Asn91 each contribute to the a divalent metal cation site.

This sequence belongs to the SurE nucleotidase family. A divalent metal cation is required as a cofactor.

The protein localises to the cytoplasm. It carries out the reaction a ribonucleoside 5'-phosphate + H2O = a ribonucleoside + phosphate. Nucleotidase that shows phosphatase activity on nucleoside 5'-monophosphates. This is 5'-nucleotidase SurE from Magnetococcus marinus (strain ATCC BAA-1437 / JCM 17883 / MC-1).